We begin with the raw amino-acid sequence, 539 residues long: Acrosin-binding protein (539 aa).

Positions 1 to 25 (MRQLAAGSLLSLLKVLLLPLAPAPA) are cleaved as a signal peptide. Positions 26–106 (QDANSASTPG…ASWFESFCQF (81 aa)) are pro-ACR binding. The propeptide at 26–269 (QDANSASTPG…NPFSFTPRVR (244 aa)) is removed in active form. Residues 186–259 (LGGQEQGQEH…PKFQSEFVSS (74 aa)) form a disordered region. A compositionally biased stretch (basic and acidic residues) spans 192-211 (GQEHKQEHKQEQGQEHKQDE). Residues 212–238 (GQEQEEQEEEQEEEGKQEEGQGTEESL) show a composition bias toward acidic residues. The interval 315-423 (LPHVDALLVL…TQIGTLKSGR (109 aa)) is pro-ACR binding.

As to quaternary structure, binds specifically to the 55- and 53-kDa proacrosins and the 49-kDa acrosin intermediate, but is not capable of binding 43-kDa acrosin intermediate and 32-kDa mature acrosin. Post-translationally, the N-terminus is blocked. Synthesized as a 60-kDa precursor, the 35-kDa mature form is post-translationally produced by the removal of the N-terminal half of the precursor during sperm maturation in the testis and/or epididymis. In terms of processing, phosphorylated on Tyr residues in capacitated sperm. In terms of tissue distribution, specifically expressed in testis.

Its subcellular location is the secreted. It localises to the cytoplasmic vesicle. The protein localises to the secretory vesicle. The protein resides in the acrosome. Functionally, acrosomal protein that maintains proacrosin (pro-ACR) as an enzymatically inactive zymogen in the acrosome. Involved also in the acrosome formation. This is Acrosin-binding protein from Sus scrofa (Pig).